The chain runs to 311 residues: uncharacterized protein (311 aa).

This is an uncharacterized protein from Mycoplasma genitalium (strain ATCC 33530 / DSM 19775 / NCTC 10195 / G37) (Mycoplasmoides genitalium).